The chain runs to 248 residues: 5'-nucleotidase SurE (248 aa).

A divalent metal cation is bound by residues Asp-8, Asp-9, Ser-39, and Asn-91.

The protein belongs to the SurE nucleotidase family. Requires a divalent metal cation as cofactor.

Its subcellular location is the cytoplasm. It catalyses the reaction a ribonucleoside 5'-phosphate + H2O = a ribonucleoside + phosphate. Nucleotidase that shows phosphatase activity on nucleoside 5'-monophosphates. In Neisseria meningitidis serogroup B (strain ATCC BAA-335 / MC58), this protein is 5'-nucleotidase SurE.